The following is a 194-amino-acid chain: MKIWTSEHVFDHPWETVTTAAMQKYPNPMNPSVVGVDVLDRHIDASGKLHSHRLLSTEWGLPSIVKSIIGAARTKTYVQEHSVVDPVAKTMELKSTNISFTNMVSVDERLIYKPHPQDSEKTVLTQEAIITVKGVSLGSYLEGLMASTISSNANKGREAMEWVIHKLNAEIEELTASARGSIRTPMAAAAFVEK.

Positions 1–172 (MKIWTSEHVF…VIHKLNAEIE (172 aa)) constitute a PRELI/MSF1 domain. 2 positions are modified to phosphoserine: serine 46 and serine 51.

It belongs to the slowmo family.

The protein is PRELI domain containing protein 3B (PRELID3B) of Sus scrofa (Pig).